Reading from the N-terminus, the 128-residue chain is Ribonuclease P protein component (128 aa).

Belongs to the RnpA family. Consists of a catalytic RNA component (M1 or rnpB) and a protein subunit.

The enzyme catalyses Endonucleolytic cleavage of RNA, removing 5'-extranucleotides from tRNA precursor.. Its function is as follows. RNaseP catalyzes the removal of the 5'-leader sequence from pre-tRNA to produce the mature 5'-terminus. It can also cleave other RNA substrates such as 4.5S RNA. The protein component plays an auxiliary but essential role in vivo by binding to the 5'-leader sequence and broadening the substrate specificity of the ribozyme. The sequence is that of Ribonuclease P protein component from Prochlorococcus marinus (strain NATL2A).